The primary structure comprises 248 residues: MDRVAFTLFGIDIMWYGILMACGMILGTLIAIKEAKRVGIKEDDVLNIAIIAIPVGLICARIYYVVFNWSYYAQNMSQIFNFRGGGLAIHGGLIGGILAGYIYTKIKNINFLKMADTVILGMPLAQAIGRWGNFINGEAHGGATNLPWGIMVDGVKVHPTFLYESIWDFGIFIVLLLFRKNKKYEGQVIVTYITLYSIGRFFIEGLRTDSLMLGPLRMAQVISLIGVIGGIIAHVYLSKKNKNNISEE.

A run of 3 helical transmembrane segments spans residues 6–26 (FTLF…GMIL), 47–67 (NIAI…YVVF), and 84–104 (GGGL…YIYT). Arg130 is an a 1,2-diacyl-sn-glycero-3-phospho-(1'-sn-glycerol) binding site. 2 helical membrane passes run 186–206 (GQVI…IEGL) and 218–238 (MAQV…VYLS).

The protein belongs to the Lgt family.

Its subcellular location is the cell membrane. It catalyses the reaction L-cysteinyl-[prolipoprotein] + a 1,2-diacyl-sn-glycero-3-phospho-(1'-sn-glycerol) = an S-1,2-diacyl-sn-glyceryl-L-cysteinyl-[prolipoprotein] + sn-glycerol 1-phosphate + H(+). It functions in the pathway protein modification; lipoprotein biosynthesis (diacylglyceryl transfer). In terms of biological role, catalyzes the transfer of the diacylglyceryl group from phosphatidylglycerol to the sulfhydryl group of the N-terminal cysteine of a prolipoprotein, the first step in the formation of mature lipoproteins. The chain is Phosphatidylglycerol--prolipoprotein diacylglyceryl transferase from Clostridioides difficile (strain 630) (Peptoclostridium difficile).